A 425-amino-acid polypeptide reads, in one-letter code: CBS domain-containing protein CBSX6 (425 aa).

Positions 16-90 constitute a CBS 1 domain; it reads GKPEMVEFYE…FLAKTECLQE (75 aa). A compositionally biased stretch (low complexity) spans 159–172; sequence SENSSSSSGLSADS. The tract at residues 159 to 182 is disordered; the sequence is SENSSSSSGLSADSTNRPTTSMTS. The segment covering 173 to 182 has biased composition (polar residues); it reads TNRPTTSMTS. Helical transmembrane passes span 200–220 and 275–295; these read IGVL…LGII and YLAA…MGVE. The CBS 2 domain occupies 347 to 409; that stretch reads MYRGRSAPLT…TAVTKQPSAF (63 aa).

The protein resides in the vacuole membrane. The sequence is that of CBS domain-containing protein CBSX6 (CBSX6) from Arabidopsis thaliana (Mouse-ear cress).